Here is a 109-residue protein sequence, read N- to C-terminus: Nucleoid-associated protein CC_0268 (109 aa).

Belongs to the YbaB/EbfC family. As to quaternary structure, homodimer.

It is found in the cytoplasm. The protein resides in the nucleoid. Binds to DNA and alters its conformation. May be involved in regulation of gene expression, nucleoid organization and DNA protection. The polypeptide is Nucleoid-associated protein CC_0268 (Caulobacter vibrioides (strain ATCC 19089 / CIP 103742 / CB 15) (Caulobacter crescentus)).